The chain runs to 588 residues: Pre-mRNA-splicing ATP-dependent RNA helicase PRP28 (588 aa).

Residues 15-94 (NKKKGLDENT…PSKQNGSKFH (80 aa)) form a disordered region. Basic and acidic residues-rich tracts occupy residues 35–49 (NKQE…KENE) and 60–83 (AKVE…DKKR). At Ser-69 the chain carries Phosphoserine. Positions 172 to 202 (RNWEELNIIPRDLLRVIIQELRFPSPTPIQR) match the Q motif motif. Positions 208 to 399 (VCNMKQYRDF…AGYMQKPVYA (192 aa)) constitute a Helicase ATP-binding domain. Residue 221–228 (ASTGSGKT) coordinates ATP. The DEAD box signature appears at 341–344 (DEAD). The Helicase C-terminal domain occupies 427-579 (KLKPIVAKYD…EAVKNKYNVG (153 aa)).

The protein belongs to the DEAD box helicase family. DDX23/PRP28 subfamily. Component of the U5 snRNP complex, composed of at least BRR2, PRP8, PRP28, DIB1, LIN1, SMB1, SMD1, SMD2, SMD3, SME1, SMX2, SMX3, and SNU114, associated with the U5 snRNA.

Its subcellular location is the cytoplasm. The protein resides in the nucleus. The enzyme catalyses ATP + H2O = ADP + phosphate + H(+). In terms of biological role, ATP-dependent RNA helicase involved in mRNA splicing. May destabilize the U1/5'-splice site duplex to permit an effective competition for the 5'-splice site by the U6 snRNA, resulting in the switch between U1 and U6 at the 5'-splice site. May also act to unwind the U4/U6 base-pairing interaction in the U4/U6/U5 snRNP, facilitating the first covalent step of splicing. This Saccharomyces cerevisiae (strain ATCC 204508 / S288c) (Baker's yeast) protein is Pre-mRNA-splicing ATP-dependent RNA helicase PRP28 (PRP28).